Here is an 89-residue protein sequence, read N- to C-terminus: Small ribosomal subunit protein uS15 (89 aa).

Belongs to the universal ribosomal protein uS15 family. In terms of assembly, part of the 30S ribosomal subunit. Forms a bridge to the 50S subunit in the 70S ribosome, contacting the 23S rRNA.

One of the primary rRNA binding proteins, it binds directly to 16S rRNA where it helps nucleate assembly of the platform of the 30S subunit by binding and bridging several RNA helices of the 16S rRNA. Functionally, forms an intersubunit bridge (bridge B4) with the 23S rRNA of the 50S subunit in the ribosome. The sequence is that of Small ribosomal subunit protein uS15 from Colwellia psychrerythraea (strain 34H / ATCC BAA-681) (Vibrio psychroerythus).